We begin with the raw amino-acid sequence, 952 residues long: Bifunctional ent-kaurene synthase (952 aa).

A DXDD B-type cyclization motif motif is present at residues 328 to 331 (DVDD). Mg(2+)-binding residues include aspartate 668, glutamate 672, asparagine 848, aspartate 849, serine 852, and aspartate 856. Positions 668–672 (DEYME) match the DEXXE A-type cyclization motif motif.

It belongs to the terpene synthase family. The cofactor is Mg(2+).

It catalyses the reaction ent-copalyl diphosphate = ent-kaur-16-ene + diphosphate. The catalysed reaction is (2E,6E,10E)-geranylgeranyl diphosphate = ent-copalyl diphosphate. The protein operates within plant hormone biosynthesis; gibberellin biosynthesis. Its function is as follows. Bifunctional ent-kaurene synthase; part of the gene cluster that mediates the biosynthesis of gibberellins (GAs), diterpenoids that may provide a selective advantage during infection of the preferred host plant, rice. Gibberellins (GAs) are diterpenoids and are synthesized via the mevalonate pathway. Biosynthesis of the major metabolite GA3 (gibberellic acid) from geranylgeranyl diphosphate (GGPP) requires 13 steps. The GGPP produced by the geranylgeranyl diphosphate synthase GGS2 is converted to ent-kaurene via ent-copalyldiphosphate in a two-step cyclization reaction performed by the bifunctional ent-copalyl diphosphate synthase/ent-kaurene synthase enzyme (CPS/KS). Ent-Kaurene is metabolized to GAs by a series of oxidation reactions catalyzed by cytochrome P450 monooxygenases. Cytochrome P450 monooxygenase P450-4 is an ent-kaurene oxidase that catalyzes the three oxidation steps between ent-kaurene and ent-kaurenoic acid. The highly multifunctional cytochrome P450 monooxygenase P450-1 then catalyzes four steps involving oxidation at two carbon atoms, in the main pathway from ent-kaurenoic acid to GA14 via GA12-aldehyde as well as producing kaurenolides and fujenoic acids as by-products. The cytochrome P450 monooxygenase P450-2 then converts GA14 to GA4 by removal of C-20. GA4 is further converted to GA7 by the GA4 desaturase DES via 1,2-desaturation before cytochrome P450 monooxygenase P450-3, a 13-hydroxylase, hydroxylates GA7 to GA3, the final product of the GA-biosynthetic pathway. The polypeptide is Bifunctional ent-kaurene synthase (Gibberella fujikuroi (strain CBS 195.34 / IMI 58289 / NRRL A-6831) (Bakanae and foot rot disease fungus)).